The following is a 224-amino-acid chain: Phosphoribosylformylglycinamidine synthase subunit PurQ (224 aa).

In terms of domain architecture, Glutamine amidotransferase type-1 spans Lys2–Val224. The Nucleophile role is filled by Cys86. Catalysis depends on residues His194 and Glu196.

Part of the FGAM synthase complex composed of 1 PurL, 1 PurQ and 2 PurS subunits.

It localises to the cytoplasm. It carries out the reaction N(2)-formyl-N(1)-(5-phospho-beta-D-ribosyl)glycinamide + L-glutamine + ATP + H2O = 2-formamido-N(1)-(5-O-phospho-beta-D-ribosyl)acetamidine + L-glutamate + ADP + phosphate + H(+). The enzyme catalyses L-glutamine + H2O = L-glutamate + NH4(+). Its pathway is purine metabolism; IMP biosynthesis via de novo pathway; 5-amino-1-(5-phospho-D-ribosyl)imidazole from N(2)-formyl-N(1)-(5-phospho-D-ribosyl)glycinamide: step 1/2. In terms of biological role, part of the phosphoribosylformylglycinamidine synthase complex involved in the purines biosynthetic pathway. Catalyzes the ATP-dependent conversion of formylglycinamide ribonucleotide (FGAR) and glutamine to yield formylglycinamidine ribonucleotide (FGAM) and glutamate. The FGAM synthase complex is composed of three subunits. PurQ produces an ammonia molecule by converting glutamine to glutamate. PurL transfers the ammonia molecule to FGAR to form FGAM in an ATP-dependent manner. PurS interacts with PurQ and PurL and is thought to assist in the transfer of the ammonia molecule from PurQ to PurL. The polypeptide is Phosphoribosylformylglycinamidine synthase subunit PurQ (Caldanaerobacter subterraneus subsp. tengcongensis (strain DSM 15242 / JCM 11007 / NBRC 100824 / MB4) (Thermoanaerobacter tengcongensis)).